The sequence spans 175 residues: Ribosome maturation factor RimM (175 aa).

The 73-residue stretch at 94 to 166 (SDSWYEHELI…FIRLVPPGGL (73 aa)) folds into the PRC barrel domain.

It belongs to the RimM family. Binds ribosomal protein uS19.

The protein resides in the cytoplasm. Functionally, an accessory protein needed during the final step in the assembly of 30S ribosomal subunit, possibly for assembly of the head region. Essential for efficient processing of 16S rRNA. May be needed both before and after RbfA during the maturation of 16S rRNA. It has affinity for free ribosomal 30S subunits but not for 70S ribosomes. This Renibacterium salmoninarum (strain ATCC 33209 / DSM 20767 / JCM 11484 / NBRC 15589 / NCIMB 2235) protein is Ribosome maturation factor RimM.